The following is a 279-amino-acid chain: UTP--glucose-1-phosphate uridylyltransferase (279 aa).

Belongs to the UDPGP type 2 family.

It catalyses the reaction alpha-D-glucose 1-phosphate + UTP + H(+) = UDP-alpha-D-glucose + diphosphate. In terms of biological role, may play a role in stationary phase survival. The protein is UTP--glucose-1-phosphate uridylyltransferase (galU) of Pseudomonas aeruginosa (strain ATCC 15692 / DSM 22644 / CIP 104116 / JCM 14847 / LMG 12228 / 1C / PRS 101 / PAO1).